Reading from the N-terminus, the 622-residue chain is MKTLLIHSDYLEFEAKEKTKVAEKTDVLNGKMDECLTVFIAVEKDDESDPNAVVKNAVEEIIKTADNLKVKNVVVYPYAHLSSDLGSPATAKEILAEIESELSNNYEVLRAPFGWYKSFKISCKGHPLSELSRKITTDRKEEVKKEKVVSKFYIIDGESQNLTEVNDEIIAKMEDKRLLALLKHELEIKEEATERGEPPHVKYIKEKEICDYEPSSDAGHFRWYPKGKLIRDLLSDYVYNLVVERGGMPVETPVMYDLQNNAIREHADKFGERQYRFTQGGKDLMLRFAACFGQFMMKKDMYLLPKHLPLRLYELSTYSFRYEQRGELVGLKRLRAFTMPDMHTVCMDMKQAMEAFEDQLWMGLKTGDDFKTPYAIIFRFTQDFFDENKEWFFAMAKEYKQKYGKDAILEILSGRKHYWVGKVDMAVVDSFGRPIENPTVQIDVESAERFGIVVHDGDKKVHPIILHCSPTGSVERVLCGLLENAYLNTLENKPPALPTWLTPIQARVIPVGDKHEEYALEVVNKLRSSGIRADFDDREESMGKKIRNAGTDWVNYVVVIGDSEMESGKLTVTVREESELKKPKKESLSVEELIEKISSETIGAPKRPLPLPMKCSMQPIFR.

Residues 1 to 136 (MKTLLIHSDY…PLSELSRKIT (136 aa)) are editing domain. A catalytic region spans residues 199–498 (PHVKYIKEKE…TLENKPPALP (300 aa)). Positions 291, 343, and 467 each coordinate Zn(2+).

This sequence belongs to the class-II aminoacyl-tRNA synthetase family. In terms of assembly, homodimer. It depends on Zn(2+) as a cofactor.

The protein localises to the cytoplasm. The enzyme catalyses tRNA(Thr) + L-threonine + ATP = L-threonyl-tRNA(Thr) + AMP + diphosphate + H(+). Functionally, catalyzes the attachment of threonine to tRNA(Thr) in a two-step reaction: L-threonine is first activated by ATP to form Thr-AMP and then transferred to the acceptor end of tRNA(Thr). Also edits incorrectly charged L-seryl-tRNA(Thr). The protein is Threonine--tRNA ligase of Methanococcus maripaludis (strain DSM 14266 / JCM 13030 / NBRC 101832 / S2 / LL).